We begin with the raw amino-acid sequence, 436 residues long: Xylose isomerase (436 aa).

Mg(2+)-binding residues include Asp-306 and Asp-308.

Belongs to the xylose isomerase family. In terms of assembly, homotetramer. Mg(2+) is required as a cofactor.

Its subcellular location is the cytoplasm. It catalyses the reaction alpha-D-xylose = alpha-D-xylulofuranose. The sequence is that of Xylose isomerase from Rhizobium rhizogenes (strain K84 / ATCC BAA-868) (Agrobacterium radiobacter).